Reading from the N-terminus, the 1026-residue chain is Contactin-4 (1026 aa).

The N-terminal stretch at 1-18 (MRLPWELLVLQSFILCLA) is a signal peptide. 6 Ig-like C2-type domains span residues 32 to 117 (PSPV…AKLQ), 122 to 207 (DNFK…KVLG), 225 to 311 (PKIE…GQLT), 316 to 400 (PNWI…AELS), 406 to 493 (PDFS…GNLV), and 497 to 586 (PTRV…DRLS). Cystine bridges form between C50/C100, C144/C194, C247/C295, C337/C384, C429/C477, and C519/C576. N65, N90, and N191 each carry an N-linked (GlcNAc...) asparagine glycan. 3 N-linked (GlcNAc...) asparagine glycosylation sites follow: N370, N375, and N466. Fibronectin type-III domains follow at residues 599-697 (PPEA…TEEA), 702-799 (TPAN…SAEE), 804-899 (PPAS…TRKP), and 900-995 (PPSQ…ISNA). The interval 685 to 710 (PSRPSEKRRTEEALPEVTPANVSGGG) is disordered. The segment covering 687 to 696 (RPSEKRRTEE) has biased composition (basic and acidic residues). N-linked (GlcNAc...) asparagine glycosylation is found at N705, N764, N858, N893, N911, N929, and N954. The span at 886 to 896 (GPSSATVNVTT) shows a compositional bias: polar residues. Positions 886-907 (GPSSATVNVTTRKPPPSQPPGN) are disordered. S1000 is lipidated: GPI-anchor amidated serine. A propeptide spans 1001 to 1026 (GASTSNACTLSAISTIMISLTARSSL) (removed in mature form).

It belongs to the immunoglobulin superfamily. Contactin family. Interacts with PTPRG. In terms of tissue distribution, mainly expressed in brain. Highly expressed in cerebellum and weakly expressed in corpus callosum, caudate nucleus, amygdala and spinal cord. Also expressed in testis, pancreas, thyroid, uterus, small intestine and kidney. Not expressed in skeletal muscle. Isoform 2 is weakly expressed in cerebral cortex.

It is found in the cell membrane. Its subcellular location is the secreted. Functionally, contactins mediate cell surface interactions during nervous system development. Has some neurite outgrowth-promoting activity. May be involved in synaptogenesis. This chain is Contactin-4 (CNTN4), found in Homo sapiens (Human).